The chain runs to 268 residues: Zinc finger protein SNAI2 (268 aa).

The segment at 1–20 (MPRSFLVKKHFNASKKPNYS) is SNAG domain. Positions 84–116 (GRVSPLPSSDTSSKDHSGSESPISDEEERLQPK) are disordered. 4 consecutive C2H2-type zinc fingers follow at residues 128–150 (FQCN…KQLH), 159–181 (FSCK…IRTH), 185–207 (CVCK…IRTH), and 213–235 (FSCP…LQTH). The segment at 241–264 (YQCKNCSKTFSRMSLLHKHEESGC) adopts a C2H2-type 5; atypical zinc-finger fold.

This sequence belongs to the snail C2H2-type zinc-finger protein family. Interacts (via SNAG domain) with LIMD1 (via LIM domains), WTIP (via LIM domains) and AJUBA (via LIM domains). Interacts (via zinc fingers) with KPNA2, KPNB1 and TNPO1. May interact (via zinc fingers) with IPO7. Phosphorylated by GSK3B. Once phosphorylated, it becomes a target for ubiquitination. Post-translationally, ubiquitinated by the SCF(FBXO11) complex; ubiquitination requires previous GSK3B-mediated SNAI2 phosphorylation.

Its subcellular location is the nucleus. It is found in the cytoplasm. Its function is as follows. Transcriptional repressor that modulates both activator-dependent and basal transcription. Involved in the generation and migration of neural crest cells. Plays a role in mediating RAF1-induced transcriptional repression of the TJ protein, occludin (OCLN) and subsequent oncogenic transformation of epithelial cells. Represses BRCA2 expression by binding to its E2-box-containing silencer and recruiting CTBP1 and HDAC1 in breast cells. In epidermal keratinocytes, binds to the E-box in ITGA3 promoter and represses its transcription. Involved in the regulation of ITGB1 and ITGB4 expression and cell adhesion and proliferation in epidermal keratinocytes. Binds to E-box2 domain of BSG and activates its expression during TGFB1-induced epithelial-mesenchymal transition (EMT) in hepatocytes. Represses E-Cadherin/CDH1 transcription via E-box elements. Involved in osteoblast maturation. Binds to RUNX2 and SOC9 promoters and may act as a positive and negative transcription regulator, respectively, in osteoblasts. Binds to CXCL12 promoter via E-box regions in mesenchymal stem cells and osteoblasts. Plays an essential role in TWIST1-induced EMT and its ability to promote invasion and metastasis. This chain is Zinc finger protein SNAI2 (Snai2), found in Rattus norvegicus (Rat).